The chain runs to 118 residues: Ribosome-binding factor A (118 aa).

This sequence belongs to the RbfA family. As to quaternary structure, monomer. Binds 30S ribosomal subunits, but not 50S ribosomal subunits or 70S ribosomes.

It is found in the cytoplasm. Functionally, one of several proteins that assist in the late maturation steps of the functional core of the 30S ribosomal subunit. Associates with free 30S ribosomal subunits (but not with 30S subunits that are part of 70S ribosomes or polysomes). Required for efficient processing of 16S rRNA. May interact with the 5'-terminal helix region of 16S rRNA. This chain is Ribosome-binding factor A, found in Bacillus cereus (strain ATCC 10987 / NRS 248).